A 405-amino-acid chain; its full sequence is Arginine biosynthesis bifunctional protein ArgJ (405 aa).

6 residues coordinate substrate: T152, K178, T189, E276, N400, and T405. T189 functions as the Nucleophile in the catalytic mechanism.

The protein belongs to the ArgJ family. In terms of assembly, heterotetramer of two alpha and two beta chains.

The protein localises to the cytoplasm. It carries out the reaction N(2)-acetyl-L-ornithine + L-glutamate = N-acetyl-L-glutamate + L-ornithine. It catalyses the reaction L-glutamate + acetyl-CoA = N-acetyl-L-glutamate + CoA + H(+). The protein operates within amino-acid biosynthesis; L-arginine biosynthesis; L-ornithine and N-acetyl-L-glutamate from L-glutamate and N(2)-acetyl-L-ornithine (cyclic): step 1/1. It functions in the pathway amino-acid biosynthesis; L-arginine biosynthesis; N(2)-acetyl-L-ornithine from L-glutamate: step 1/4. Functionally, catalyzes two activities which are involved in the cyclic version of arginine biosynthesis: the synthesis of N-acetylglutamate from glutamate and acetyl-CoA as the acetyl donor, and of ornithine by transacetylation between N(2)-acetylornithine and glutamate. This chain is Arginine biosynthesis bifunctional protein ArgJ, found in Pseudomonas aeruginosa (strain ATCC 15692 / DSM 22644 / CIP 104116 / JCM 14847 / LMG 12228 / 1C / PRS 101 / PAO1).